A 511-amino-acid polypeptide reads, in one-letter code: Zinc finger CCCH-type with G patch domain-containing protein (511 aa).

The residue at position 1 (Met1) is an N-acetylmethionine. At Ser70 the chain carries Phosphoserine. Residues 92–129 (PGAPCNDSETAPGSEVQPGSTSSALEEEEEDPDLEELS) form a disordered region. Over residues 98-115 (DSETAPGSEVQPGSTSSA) the composition is skewed to polar residues. The segment covering 116–127 (LEEEEEDPDLEE) has biased composition (acidic residues). Residues 174 to 200 (KSLKPCPFFLEGKCRFKENCRFSHGQV) form a C3H1-type zinc finger. The tract at residues 266 to 291 (PPLRTEATESSDSDTGDASDSSYARV) is disordered. Position 276 is a phosphoserine (Ser276). At Thr280 the chain carries Phosphothreonine. One can recognise a G-patch domain in the interval 313 to 359 (TRGIGSKLLVKMGYEFGKGLGRHAEGRVEPIHAVVLPRGKSLDQCAE). Position 353 is a phosphoserine (Ser353). Disordered stretches follow at residues 363–393 (KKTK…PPRN) and 490–511 (AQEA…MTEF). The span at 491–511 (QEADLQRKQRKADTHRKMTEF) shows a compositional bias: basic and acidic residues.

Interacts with CHD4/Mi-2; the interaction is direct.

It is found in the nucleus. Transcription repressor that specifically binds the 5'-GGAG[GA]A[GA]A-3' consensus sequence. Represses transcription by recruiting the chromatin multiprotein complex NuRD to target promoters. Negatively regulates expression of EGFR, a gene involved in cell proliferation, survival and migration. Its ability to repress genes of the EGFR pathway suggest it may act as a tumor suppressor. This chain is Zinc finger CCCH-type with G patch domain-containing protein (Zgpat), found in Mus musculus (Mouse).